We begin with the raw amino-acid sequence, 1080 residues long: ATP-dependent helicase/deoxyribonuclease subunit B (1080 aa).

The protein belongs to the helicase family. AddB/RexB type 2 subfamily. In terms of assembly, heterodimer of AddA and RexB. Mg(2+) is required as a cofactor.

Its function is as follows. The heterodimer acts as both an ATP-dependent DNA helicase and an ATP-dependent, dual-direction single-stranded exonuclease. Recognizes the chi site generating a DNA molecule suitable for the initiation of homologous recombination. This subunit has 5' -&gt; 3' nuclease activity but not helicase activity. The chain is ATP-dependent helicase/deoxyribonuclease subunit B from Streptococcus mutans serotype c (strain ATCC 700610 / UA159).